The sequence spans 443 residues: ATP-dependent protease ATPase subunit HslU (443 aa).

ATP is bound by residues Ile-18, 60-65, Asp-256, Glu-321, and Arg-393; that span reads GVGKTE.

It belongs to the ClpX chaperone family. HslU subfamily. As to quaternary structure, a double ring-shaped homohexamer of HslV is capped on each side by a ring-shaped HslU homohexamer. The assembly of the HslU/HslV complex is dependent on binding of ATP.

Its subcellular location is the cytoplasm. ATPase subunit of a proteasome-like degradation complex; this subunit has chaperone activity. The binding of ATP and its subsequent hydrolysis by HslU are essential for unfolding of protein substrates subsequently hydrolyzed by HslV. HslU recognizes the N-terminal part of its protein substrates and unfolds these before they are guided to HslV for hydrolysis. This chain is ATP-dependent protease ATPase subunit HslU, found in Buchnera aphidicola subsp. Acyrthosiphon pisum (strain APS) (Acyrthosiphon pisum symbiotic bacterium).